The sequence spans 500 residues: Histidine--tRNA ligase (500 aa).

The protein belongs to the class-II aminoacyl-tRNA synthetase family. In terms of assembly, homodimer.

Its subcellular location is the cytoplasm. It catalyses the reaction tRNA(His) + L-histidine + ATP = L-histidyl-tRNA(His) + AMP + diphosphate + H(+). The polypeptide is Histidine--tRNA ligase (hisS) (Mesorhizobium japonicum (strain LMG 29417 / CECT 9101 / MAFF 303099) (Mesorhizobium loti (strain MAFF 303099))).